A 380-amino-acid polypeptide reads, in one-letter code: MATNIRKTHPLFKIINNSLIDLPTPANISIWWNFGSLLGMCLIIQILTGLFLAMHYTADISSAFSSVAHICRDVNYGWLIRNIHANGASMFFICVYLHIARGLYYGSYLNKETWNIGVVILLLLMVTAFVGYVLPWGQMSFWGATVITNLLSALPYIGDTLVQWIWGGFSIDNATLTRFFTFHFLFPFVTAALTMIHLLFLHETGSNNPTGLTSNTDKIPFHPYFTYKDLVGFFILLFLLTLLALFTPNLLNDAENFIPANPLLTPPHIKPEWYFLFAYAILRSIPNKLGGVLALVFSILILLLVPILHTSKQRSLTFRPITQILFWLLVTNTIILTWIGGQPVEQPFITIGQIASITYFSFFLILFPIAGWWENKMLNL.

The next 4 membrane-spanning stretches (helical) occupy residues 34–54 (FGSL…FLAM), 78–99 (WLIR…YLHI), 114–134 (WNIG…GYVL), and 179–199 (FFTF…IHLL). Heme b contacts are provided by His-84 and His-98. His-183 and His-197 together coordinate heme b. His-202 serves as a coordination point for a ubiquinone. 4 consecutive transmembrane segments (helical) span residues 227–247 (YKDL…ALFT), 289–309 (LGGV…PILH), 321–341 (ITQI…WIGG), and 348–368 (FITI…ILFP).

The protein belongs to the cytochrome b family. In terms of assembly, the cytochrome bc1 complex contains 3 respiratory subunits (MT-CYB, CYC1 and UQCRFS1), 2 core proteins (UQCRC1 and UQCRC2) and probably 6 low-molecular weight proteins. Requires heme b as cofactor.

It localises to the mitochondrion inner membrane. Component of the ubiquinol-cytochrome c reductase complex (complex III or cytochrome b-c1 complex) that is part of the mitochondrial respiratory chain. The b-c1 complex mediates electron transfer from ubiquinol to cytochrome c. Contributes to the generation of a proton gradient across the mitochondrial membrane that is then used for ATP synthesis. In Hemitrygon laosensis (Mekong freshwater stingray), this protein is Cytochrome b (mt-cyb).